The following is a 1022-amino-acid chain: Polyamine-modulated factor 1-binding protein 1 (1022 aa).

Coiled-coil stretches lie at residues 89–121, 169–281, 312–377, 411–732, and 758–968; these read NKQYHLRQLQQLKKKLLTLQQELEFRTQELQAS, EKLH…ACSN, SEDC…LREE, LKKD…SAIQ, and QDDL…KAGN. Composition is skewed to basic and acidic residues over residues 545–556 and 571–582; these read QKESSKIEEERK and EGQRRLSNAEKE. Residues 545–582 are disordered; it reads QKESSKIEEERKHNRQRLQELSSELSEGQRRLSNAEKE.

As to expression, expressed in the testis.

It is found in the cell projection. The protein localises to the cilium. The protein resides in the flagellum. Functionally, required for normal spermatogenesis. It functions as a scaffold protein that attaches the sperm head-tail connecting piece to the nuclear envelope, thus maintaining sperm head and tail integrity. May also be involved in the general organization of cellular cytoskeleton. This chain is Polyamine-modulated factor 1-binding protein 1 (Pmfbp1), found in Mus musculus (Mouse).